Reading from the N-terminus, the 466-residue chain is Cell division protein FtsP (466 aa).

Positions 1–28 (MNYSRRSLFKKTLIATALSALPATLLAA) form a signal peptide, tat-type signal.

The protein belongs to the FtsP family. Predicted to be exported by the Tat system. The position of the signal peptide cleavage has not been experimentally proven.

It localises to the periplasm. Functionally, cell division protein that is required for growth during stress conditions. May be involved in protecting or stabilizing the divisomal assembly under conditions of stress. This Actinobacillus succinogenes (strain ATCC 55618 / DSM 22257 / CCUG 43843 / 130Z) protein is Cell division protein FtsP.